Reading from the N-terminus, the 1234-residue chain is ATP-dependent helicase/nuclease subunit A (1234 aa).

A UvrD-like helicase ATP-binding domain is found at 2–475 (TQFTTSQQAA…IILAENFRST (474 aa)). 23-30 (ASAGSGKT) contacts ATP. One can recognise a UvrD-like helicase C-terminal domain in the interval 507 to 806 (YGALDYGDAH…KLMTIHKSKG (300 aa)).

This sequence belongs to the helicase family. AddA subfamily. Heterodimer of AddA and AddB/RexB. Mg(2+) serves as cofactor.

The enzyme catalyses Couples ATP hydrolysis with the unwinding of duplex DNA by translocating in the 3'-5' direction.. It carries out the reaction ATP + H2O = ADP + phosphate + H(+). In terms of biological role, the heterodimer acts as both an ATP-dependent DNA helicase and an ATP-dependent, dual-direction single-stranded exonuclease. Recognizes the chi site generating a DNA molecule suitable for the initiation of homologous recombination. The AddA nuclease domain is required for chi fragment generation; this subunit has the helicase and 3' -&gt; 5' nuclease activities. This Lacticaseibacillus casei (strain BL23) (Lactobacillus casei) protein is ATP-dependent helicase/nuclease subunit A.